The following is a 146-amino-acid chain: Hemoglobin subunit beta-1 (146 aa).

The region spanning 2-146 (KWTDKERAVI…VVSALGKQYC (145 aa)) is the Globin domain. Positions 63 and 92 each coordinate heme b.

It belongs to the globin family. In terms of assembly, heterotetramer of two alpha chains and two beta chains. In terms of tissue distribution, red blood cells.

In terms of biological role, involved in oxygen transport from gills to the various peripheral tissues. The polypeptide is Hemoglobin subunit beta-1 (Lycodes reticulatus (Arctic eelpout)).